The sequence spans 293 residues: 4-hydroxy-tetrahydrodipicolinate synthase (293 aa).

Pyruvate is bound at residue T45. The Proton donor/acceptor role is filled by Y133. K162 functions as the Schiff-base intermediate with substrate in the catalytic mechanism. I204 is a pyruvate binding site.

This sequence belongs to the DapA family. Homotetramer; dimer of dimers.

It is found in the cytoplasm. It carries out the reaction L-aspartate 4-semialdehyde + pyruvate = (2S,4S)-4-hydroxy-2,3,4,5-tetrahydrodipicolinate + H2O + H(+). The protein operates within amino-acid biosynthesis; L-lysine biosynthesis via DAP pathway; (S)-tetrahydrodipicolinate from L-aspartate: step 3/4. In terms of biological role, catalyzes the condensation of (S)-aspartate-beta-semialdehyde [(S)-ASA] and pyruvate to 4-hydroxy-tetrahydrodipicolinate (HTPA). This chain is 4-hydroxy-tetrahydrodipicolinate synthase, found in Chelativorans sp. (strain BNC1).